A 162-amino-acid polypeptide reads, in one-letter code: tRNA (cytidine(34)-2'-O)-methyltransferase (162 aa).

The S-adenosyl-L-methionine site is built by leucine 83, glycine 105, isoleucine 127, and serine 135.

It belongs to the class IV-like SAM-binding methyltransferase superfamily. RNA methyltransferase TrmH family. TrmL subfamily. Homodimer.

The protein localises to the cytoplasm. The enzyme catalyses cytidine(34) in tRNA + S-adenosyl-L-methionine = 2'-O-methylcytidine(34) in tRNA + S-adenosyl-L-homocysteine + H(+). It catalyses the reaction 5-carboxymethylaminomethyluridine(34) in tRNA(Leu) + S-adenosyl-L-methionine = 5-carboxymethylaminomethyl-2'-O-methyluridine(34) in tRNA(Leu) + S-adenosyl-L-homocysteine + H(+). Its function is as follows. Methylates the ribose at the nucleotide 34 wobble position in the two leucyl isoacceptors tRNA(Leu)(CmAA) and tRNA(Leu)(cmnm5UmAA). Catalyzes the methyl transfer from S-adenosyl-L-methionine to the 2'-OH of the wobble nucleotide. The polypeptide is tRNA (cytidine(34)-2'-O)-methyltransferase (Photorhabdus asymbiotica subsp. asymbiotica (strain ATCC 43949 / 3105-77) (Xenorhabdus luminescens (strain 2))).